A 390-amino-acid chain; its full sequence is Chorismate synthase 1 (390 aa).

Arg-39 and Arg-45 together coordinate NADP(+). Residues 95-117 (EQEEKEMKRKVTKPRPGHADLNG) are disordered. FMN is bound by residues 132 to 134 (RSS), 253 to 254 (NA), Gly-298, 313 to 317 (KPIPT), and Arg-339.

This sequence belongs to the chorismate synthase family. As to quaternary structure, homotetramer. Requires FMNH2 as cofactor.

It catalyses the reaction 5-O-(1-carboxyvinyl)-3-phosphoshikimate = chorismate + phosphate. Its pathway is metabolic intermediate biosynthesis; chorismate biosynthesis; chorismate from D-erythrose 4-phosphate and phosphoenolpyruvate: step 7/7. Catalyzes the anti-1,4-elimination of the C-3 phosphate and the C-6 proR hydrogen from 5-enolpyruvylshikimate-3-phosphate (EPSP) to yield chorismate, which is the branch point compound that serves as the starting substrate for the three terminal pathways of aromatic amino acid biosynthesis. This reaction introduces a second double bond into the aromatic ring system. The polypeptide is Chorismate synthase 1 (Bacillus cereus (strain ZK / E33L)).